Consider the following 387-residue polypeptide: SLC2A4 regulator (387 aa).

Disordered regions lie at residues 1–97 (MERP…RATP) and 139–179 (EALV…PPEA). Positions 27–36 (GPGPRAAPVT) are enriched in low complexity. Residues 200–225 (FQCLWKSCGKVLSTASAMQRHIRLVH) form a C2H2-type zinc finger. A Nuclear export signal motif is present at residues 253 to 263 (LTDGLSSLTPV). Phosphoserine is present on residues S264 and S268. Residues 283-305 (EPPALPSPLRPPAPPLPPPPVLS) form a disordered region. Pro residues predominate over residues 285 to 303 (PALPSPLRPPAPPLPPPPV). The short motif at 351–354 (RKPR) is the Nuclear localization signal element.

In terms of assembly, interacts with MEF2A. As to expression, according to PubMed:14630949, expressed in heart, skeletal muscle, liver, kidney and pancreas; undetectable in lung, placenta or brain. According to PubMed:14625278, ubiquitously expressed, with lowest expression in brain and ileum.

Its subcellular location is the cytoplasm. It localises to the nucleus. In terms of biological role, transcription factor involved in SLC2A4 and HD gene transactivation. Binds to the consensus sequence 5'-GCCGGCG-3'. This Homo sapiens (Human) protein is SLC2A4 regulator (SLC2A4RG).